We begin with the raw amino-acid sequence, 331 residues long: Laforin (331 aa).

Residues 1–124 (MRFRFGVVVP…NNLVDGVYCL (124 aa)) form the CBM20 domain. Serine 25 carries the phosphoserine; by AMPK modification. Substrate contacts are provided by residues tryptophan 32, lysine 87, 103–107 (GPHHD), aspartate 197, aspartate 235, and arginine 241. One can recognise a Tyrosine-protein phosphatase domain in the interval 156-323 (HYSRILPNIW…QEDFFQKFGK (168 aa)). Catalysis depends on cysteine 266, which acts as the Phosphocysteine intermediate. A Glucan phosphatase signature motif CXAGXGR motif is present at residues 266-272 (CNAGVGR). Substrate is bound by residues 267-272 (NAGVGR) and tyrosine 304.

It belongs to the protein-tyrosine phosphatase family. Homodimer. Interacts with itself. Interacts with PPP1R3B, PPP1R3C, PPP1R3D, HIRIP5, and EPM2AIP1. Binds glycogen and Lafora bodies. Interacts with NHLRC1/malin (via the NHL repeats). Forms a complex with NHLRC1/malin and HSP70. Interacts with PPP1R3D; in the presence of NHLC1/malin the interaction leads to ubiquitination and autophagic degradation of PPP1R3D. Interacts (via the phosphatase domain) with MAPT/Tau; the interaction dephosphorylates MAPT. Isoform 1 and isoform 2 interact to form a heterodimeric complex that lacks phosphatase activity (in vitro). Active phosphatase isoform 7 and isoform 1 interact with each other, but give rise to lower phosphatase activity than isoform 1 or isoform 7 by themselves (in vitro). Active phosphatase isoform 7 and inactive isoform 2 interact with each other, but give rise to lower phosphatase activity than isoform 7 by itself (in vitro). Interacts with PRDM8. Post-translationally, polyubiquitinated by NHLRC1/malin. In terms of processing, phosphorylation on Ser-25 by AMPK affects the phosphatase activity of the enzyme and its ability to homodimerize and interact with NHLRC1, PPP1R3C or PRKAA2. As to expression, expressed in heart, skeletal muscle, kidney, pancreas and brain. Isoform 4 is also expressed in the placenta.

It localises to the cytoplasm. The protein localises to the endoplasmic reticulum membrane. It is found in the cell membrane. The protein resides in the nucleus. It carries out the reaction O-phospho-L-tyrosyl-[protein] + H2O = L-tyrosyl-[protein] + phosphate. The catalysed reaction is O-phospho-L-seryl-[protein] + H2O = L-seryl-[protein] + phosphate. It catalyses the reaction O-phospho-L-threonyl-[protein] + H2O = L-threonyl-[protein] + phosphate. Functionally, plays an important role in preventing glycogen hyperphosphorylation and the formation of insoluble aggregates, via its activity as glycogen phosphatase, and by promoting the ubiquitination of proteins involved in glycogen metabolism via its interaction with the E3 ubiquitin ligase NHLRC1/malin. Shows strong phosphatase activity towards complex carbohydrates in vitro, avoiding glycogen hyperphosphorylation which is associated with reduced branching and formation of insoluble aggregates. Dephosphorylates phosphotyrosine and synthetic substrates, such as para-nitrophenylphosphate (pNPP), and has low activity with phosphoserine and phosphothreonine substrates (in vitro). Has been shown to dephosphorylate MAPT. Forms a complex with NHLRC1/malin and HSP70, which suppresses the cellular toxicity of misfolded proteins by promoting their degradation through the ubiquitin-proteasome system (UPS). Acts as a scaffold protein to facilitate PPP1R3C/PTG ubiquitination by NHLRC1/malin. Also promotes proteasome-independent protein degradation through the macroautophagy pathway. Does not bind to glycogen. Lacks phosphatase activity and might function as a dominant-negative regulator for the phosphatase activity of isoform 1 and isoform 7. Its function is as follows. Has phosphatase activity (in vitro). The protein is Laforin (EPM2A) of Homo sapiens (Human).